Consider the following 563-residue polypeptide: Heat shock 70 kDa protein 8 (563 aa).

The disordered stretch occupies residues 1–25 (MAEAAYTVASDSENTGEEKSSSSPS). A2 carries the N-acetylalanine modification.

The protein belongs to the heat shock protein 70 (TC 1.A.33) family. DnaK subfamily.

In terms of biological role, in cooperation with other chaperones, Hsp70s are key components that facilitate folding of de novo synthesized proteins, assist translocation of precursor proteins into organelles, and are responsible for degradation of damaged protein under stress conditions. The protein is Heat shock 70 kDa protein 8 (HSP70-8) of Arabidopsis thaliana (Mouse-ear cress).